The primary structure comprises 131 residues: Small ribosomal subunit protein uS8 (131 aa).

The protein belongs to the universal ribosomal protein uS8 family. In terms of assembly, part of the 30S ribosomal subunit. Contacts proteins S5 and S12.

Functionally, one of the primary rRNA binding proteins, it binds directly to 16S rRNA central domain where it helps coordinate assembly of the platform of the 30S subunit. The sequence is that of Small ribosomal subunit protein uS8 from Bordetella parapertussis (strain 12822 / ATCC BAA-587 / NCTC 13253).